Consider the following 634-residue polypeptide: Chaperone protein DnaK (634 aa).

Residue T197 is modified to Phosphothreonine; by autocatalysis. Basic and acidic residues predominate over residues 515–528 (LHKEDDKKRKESVD). Disordered stretches follow at residues 515–536 (LHKE…ADAI) and 595–634 (YKAA…AEVE). Residues 603–615 (NAGGTAGGNGNAG) are compositionally biased toward gly residues.

The protein belongs to the heat shock protein 70 family.

Acts as a chaperone. The protein is Chaperone protein DnaK of Campylobacter hominis (strain ATCC BAA-381 / DSM 21671 / CCUG 45161 / LMG 19568 / NCTC 13146 / CH001A).